Reading from the N-terminus, the 171-residue chain is Protein X (171 aa).

3 consecutive transmembrane segments (helical) span residues 11-31 (SWYQ…IYSL), 38-58 (LAGI…VYLM), and 73-93 (AVIA…WLVI).

It localises to the virion membrane. The chain is Protein X (VPX) from Mus musculus domesticus (western European house mouse).